The primary structure comprises 597 residues: MAGYDVVVVGGGHAGLEAAWAAAALGVRVALVTVNPDRIGMMPCNPAVGGPGKSQLVAEVVALGGLMGRAADAAAIHTRVLNRSKGPAVQSLRVQVDRDLYALKAQEILAERPVEVLRGEVAALWVEGGRLLGVRTVDGRTLPAKAVVVAGGTFLSGVVWYGRKSRPAGRQGEPPARFLSQSLKAVGHTLRRFKTGTPPRIRADSVDFGRLEVVPPEVPPGSFTGNPGPHAARLPTWQTRTTARTHRLIRENLHLSPLYAGDIQGIGPRYCPSIEDKVVRFADKESHLLFVEPDGLSTTEVYLQGFSSSLPPELQEEMVRSLPGFERAVIQRYAYAVEYDSLDPTELTRGLQSRLLPGLFSAGQVNGTSGYEEAAAQGLLAGLNAARFALGLPEVHLPRESGYIGVLVDDLVGRGTDEPYRMMTSRVELRLLCRADNADERLTPLAVAWGLRPKEDLERVEAKYRRVAAELRRLQALRVEGVSGLQWLRRPENTYRALAERFPPSEPLSPEEAYQVEVRAKYAGYIERQERLREKMKDLEAFRIPEGMDFPKVPGLSREAAEKLSRHRPKSLAEAARIPGVRDSDLTALAVHLRRGA.

10 to 15 (GGGHAG) is a binding site for FAD. Position 267 to 281 (267 to 281 (GPRYCPSIEDKVVRF)) interacts with NAD(+).

It belongs to the MnmG family. As to quaternary structure, homodimer. Heterotetramer of two MnmE and two MnmG subunits. FAD is required as a cofactor.

Its subcellular location is the cytoplasm. NAD-binding protein involved in the addition of a carboxymethylaminomethyl (cmnm) group at the wobble position (U34) of certain tRNAs, forming tRNA-cmnm(5)s(2)U34. This Thermus thermophilus (strain ATCC 27634 / DSM 579 / HB8) protein is tRNA uridine 5-carboxymethylaminomethyl modification enzyme MnmG.